The primary structure comprises 308 residues: Aspartate carbamoyltransferase catalytic subunit (308 aa).

Positions 57 and 58 each coordinate carbamoyl phosphate. K86 lines the L-aspartate pocket. Carbamoyl phosphate is bound by residues R107, H135, and Q138. Residues R168 and R229 each coordinate L-aspartate. Residues L268 and P269 each coordinate carbamoyl phosphate.

This sequence belongs to the aspartate/ornithine carbamoyltransferase superfamily. ATCase family. Heterooligomer of catalytic and regulatory chains.

It carries out the reaction carbamoyl phosphate + L-aspartate = N-carbamoyl-L-aspartate + phosphate + H(+). It participates in pyrimidine metabolism; UMP biosynthesis via de novo pathway; (S)-dihydroorotate from bicarbonate: step 2/3. Catalyzes the condensation of carbamoyl phosphate and aspartate to form carbamoyl aspartate and inorganic phosphate, the committed step in the de novo pyrimidine nucleotide biosynthesis pathway. This Pyrococcus abyssi (strain GE5 / Orsay) protein is Aspartate carbamoyltransferase catalytic subunit.